A 272-amino-acid polypeptide reads, in one-letter code: Insulin-like growth factor-binding protein 1 (272 aa).

A signal peptide spans 1-25; the sequence is MPEFLTVVSWPFLILLSFQVRVVAG. Residues 28–109 enclose the IGFBP N-terminal domain; that stretch reads QPWHCAPCTA…TRGQGACVLE (82 aa). 6 disulfide bridges follow: cysteine 32–cysteine 59, cysteine 35–cysteine 61, cysteine 43–cysteine 62, cysteine 50–cysteine 65, cysteine 73–cysteine 86, and cysteine 80–cysteine 106. The disordered stretch occupies residues 115–143; the sequence is TSSLSGSQHEEAKAAVASEDELAESPEMT. Residues 132-143 are compositionally biased toward acidic residues; it reads SEDELAESPEMT. A phosphoserine mark is found at serine 139, serine 157, and serine 169. At threonine 170 the chain carries Phosphothreonine. Residue tyrosine 171 is modified to Phosphotyrosine. The Thyroglobulin type-1 domain maps to 186-264; the sequence is KEPCQRELYK…SLETRGDPNC (79 aa). Cystine bridges form between cysteine 189-cysteine 219, cysteine 230-cysteine 241, and cysteine 243-cysteine 264. Serine 255 is modified (phosphoserine). A Cell attachment site motif is present at residues 259 to 261; that stretch reads RGD.

In terms of assembly, binds equally well IGF1 and IGF2. Interacts with integrin ITGA5:ITGB1. Interacts with VHL; this interaction inhibits HIF1A degradation.

Its subcellular location is the secreted. Its function is as follows. Multifunctional protein that plays a critical role in regulating the availability of IGFs such as IGF1 and IGF2 to their receptors and thereby regulates IGF-mediated cellular processes including cell migration, proliferation, differentiation or apoptosis in a cell-type specific manner. Also plays a positive role in cell migration by interacting with integrin ITGA5:ITGB1 through its RGD motif. Mechanistically, binding to integrins leads to activation of focal adhesion kinase/PTK2 and stimulation of the mitogen-activated protein kinase (MAPK) pathway. Regulates cardiomyocyte apoptosis by suppressing HIF-1alpha/HIF1A ubiquitination and subsequent degradation. This Rattus norvegicus (Rat) protein is Insulin-like growth factor-binding protein 1 (Igfbp1).